Consider the following 282-residue polypeptide: 4-hydroxybenzoate octaprenyltransferase (282 aa).

The next 9 helical transmembrane spans lie at 17-37 (IGIL…NQGF), 40-60 (IDLL…GCVI), 90-110 (AFIL…KLPI), 113-133 (FYFA…KRFL), 135-155 (APQL…FIAS), 163-183 (FVVL…MYAM), 207-227 (LIIA…AINK), 231-251 (WFFY…LKLI), and 262-282 (AFLV…LALI).

It belongs to the UbiA prenyltransferase family. Mg(2+) is required as a cofactor.

It localises to the cell inner membrane. The catalysed reaction is all-trans-octaprenyl diphosphate + 4-hydroxybenzoate = 4-hydroxy-3-(all-trans-octaprenyl)benzoate + diphosphate. It participates in cofactor biosynthesis; ubiquinone biosynthesis. Functionally, catalyzes the prenylation of para-hydroxybenzoate (PHB) with an all-trans polyprenyl group. Mediates the second step in the final reaction sequence of ubiquinone-8 (UQ-8) biosynthesis, which is the condensation of the polyisoprenoid side chain with PHB, generating the first membrane-bound Q intermediate 3-octaprenyl-4-hydroxybenzoate. This is 4-hydroxybenzoate octaprenyltransferase from Legionella pneumophila (strain Paris).